The chain runs to 86 residues: MQDELFETEKIPPKNTKNAKNAPKKSFEEHVHSLEQAIDRLNDPNLSLKDGMDLYKTAMQELFLAQKLLENAYLEHEKLQTPDKKA.

The tract at residues 1-27 (MQDELFETEKIPPKNTKNAKNAPKKSF) is disordered.

The protein belongs to the XseB family. As to quaternary structure, heterooligomer composed of large and small subunits.

Its subcellular location is the cytoplasm. The enzyme catalyses Exonucleolytic cleavage in either 5'- to 3'- or 3'- to 5'-direction to yield nucleoside 5'-phosphates.. Functionally, bidirectionally degrades single-stranded DNA into large acid-insoluble oligonucleotides, which are then degraded further into small acid-soluble oligonucleotides. This Helicobacter pylori (strain G27) protein is Exodeoxyribonuclease 7 small subunit.